The primary structure comprises 190 residues: Shikimate kinase (190 aa).

26-31 is a binding site for ATP; it reads GSGKST. Position 30 (Ser-30) interacts with Mg(2+). Residues Asp-48, Arg-72, and Gly-94 each contribute to the substrate site. Arg-133 lines the ATP pocket. Arg-152 lines the substrate pocket.

It belongs to the shikimate kinase family. In terms of assembly, monomer. Mg(2+) serves as cofactor.

The protein localises to the cytoplasm. It catalyses the reaction shikimate + ATP = 3-phosphoshikimate + ADP + H(+). It functions in the pathway metabolic intermediate biosynthesis; chorismate biosynthesis; chorismate from D-erythrose 4-phosphate and phosphoenolpyruvate: step 5/7. Functionally, catalyzes the specific phosphorylation of the 3-hydroxyl group of shikimic acid using ATP as a cosubstrate. In Prochlorococcus marinus (strain SARG / CCMP1375 / SS120), this protein is Shikimate kinase.